We begin with the raw amino-acid sequence, 644 residues long: Ribonuclease R (644 aa).

An RNB domain is found at 211–529 (RINYSHIPFI…LHRLLKELLF (319 aa)). Residues 573 to 644 (LEFLEKEFLG…ITERIKEHVS (72 aa)) enclose the S1 motif domain.

It belongs to the RNR ribonuclease family. RNase R subfamily.

It is found in the cytoplasm. The enzyme catalyses Exonucleolytic cleavage in the 3'- to 5'-direction to yield nucleoside 5'-phosphates.. Its function is as follows. 3'-5' exoribonuclease that releases 5'-nucleoside monophosphates and is involved in maturation of structured RNAs. This chain is Ribonuclease R, found in Helicobacter pylori (strain J99 / ATCC 700824) (Campylobacter pylori J99).